The sequence spans 291 residues: Transmembrane protein 41B (291 aa).

The segment covering 1–11 (MAKGRVADRSP) has biased composition (basic and acidic residues). Residues 1 to 43 (MAKGRVADRSPTEMLHSTPAGDRAVRTQGSAAPGSKDHLNEKP) form a disordered region. T18 bears the Phosphothreonine mark. S35 carries the post-translational modification Phosphoserine. 6 helical membrane passes run 52–72 (TSLLILVSIFSCAAFVMFLVY), 109–129 (FYVQVLVAYFATYIFLQTFAI), 147–169 (LALFLVCLCSGLGASFCYMLSYL), 197–217 (LINYIIFLRITPFLPNWFINI), 225–245 (PLKVFFIGTFLGVAPPSFVAI), and 262–282 (SWSSVFILMVLALLSILPAIF). Residues 140–251 (GFLYPFPLAL…FVAIKAGTTL (112 aa)) form a VTT domain; required for its function in autophagy region.

It belongs to the TMEM41 family. As to quaternary structure, interacts with VMP1. Interacts with COPA, COPB1, VDAC1 and ERLIN2. Interacts with ATG2A. Interacts with SURF4. In terms of tissue distribution, expressed in brain, spinal cord, kidney and first lumbar dorsal root ganglia during postnatal development. Expressed in motor neurons and proprioceptive neurons.

Its subcellular location is the endoplasmic reticulum membrane. It is found in the endomembrane system. The catalysed reaction is a 1,2-diacyl-sn-glycero-3-phospho-L-serine(in) = a 1,2-diacyl-sn-glycero-3-phospho-L-serine(out). It catalyses the reaction cholesterol(in) = cholesterol(out). The enzyme catalyses a 1,2-diacyl-sn-glycero-3-phosphocholine(in) = a 1,2-diacyl-sn-glycero-3-phosphocholine(out). It carries out the reaction a 1,2-diacyl-sn-glycero-3-phosphoethanolamine(in) = a 1,2-diacyl-sn-glycero-3-phosphoethanolamine(out). Phospholipid scramblase involved in lipid homeostasis and membrane dynamics processes. Has phospholipid scramblase activity toward cholesterol and phosphatidylserine, as well as phosphatidylethanolamine and phosphatidylcholine. Required for autophagosome formation: participates in early stages of autophagosome biogenesis at the endoplasmic reticulum (ER) membrane by reequilibrating the leaflets of the ER as lipids are extracted by ATG2 (ATG2A or ATG2B) to mediate autophagosome assembly. In addition to autophagy, involved in other processes in which phospholipid scramblase activity is required. Required for normal motor neuron development. In Mus musculus (Mouse), this protein is Transmembrane protein 41B.